A 455-amino-acid polypeptide reads, in one-letter code: MAADEEPDSPSGALQTAAEEEETKTFKDLGVTDVLCEACDQLGWAKPTKIQIEAIPLALQGRDIIGLAETGSGKTGAFALPILNALLETPQRLFALVLTPTRELAFQISEQFEALGSSIGVQCAVIVGGIDSMSQSLALAKKPHIVIATPGRLIDHLENTKGFNLRALKYLVMDEADRILNMDFETEVDKILKVIPRDRKTFLFSATMTKKVQKLQRAALKNPVKCAVSSKYQTVEKLQQYYLFIPSKFKDTYLVYILNELAGNSFMIFCSTCNNTQRTALLLRNLGFTAIPLHGQMSQSKRLGSLNKFKAKARSILLATDVASRGLDIPHVDVVVNFDIPTHSKDYIHRVGRTARAGRSGKAITFVTQYDVELFQRIEHLIGKKLPVFPTQDEEVMMLTERVNEAQRFARMELREHGEKKKRKREDAGDDDDKEGAIGVRNKVAGGKMKKRKGR.

A disordered region spans residues 1–21; the sequence is MAADEEPDSPSGALQTAAEEE. Ala2 is subject to N-acetylalanine. Ser9 carries the post-translational modification Phosphoserine. A Q motif motif is present at residues 24–52; sequence KTFKDLGVTDVLCEACDQLGWAKPTKIQI. Residues 55-226 enclose the Helicase ATP-binding domain; the sequence is IPLALQGRDI…RAALKNPVKC (172 aa). ATP is bound at residue 68–75; that stretch reads AETGSGKT. Thr149 carries the post-translational modification Phosphothreonine. The short motif at 174 to 177 is the DEAD box element; that stretch reads DEAD. The Helicase C-terminal domain occupies 237-397; sequence KLQQYYLFIP…VFPTQDEEVM (161 aa). The segment at 412-455 is disordered; it reads MELREHGEKKKRKREDAGDDDDKEGAIGVRNKVAGGKMKKRKGR.

It belongs to the DEAD box helicase family. DDX47/RRP3 subfamily. As to quaternary structure, interacts with AGO1 and AGO2. Interacts with GABARAP. Interacts with NOL8; the interaction is RNA-dependent.

It localises to the nucleus. The protein localises to the nucleolus. The enzyme catalyses ATP + H2O = ADP + phosphate + H(+). Functionally, involved in apoptosis. May have a role in rRNA processing and mRNA splicing. Associates with pre-rRNA precursors. This Mus musculus (Mouse) protein is Probable ATP-dependent RNA helicase DDX47 (Ddx47).